Consider the following 536-residue polypeptide: uncharacterized protein (536 aa).

Topologically, residues 1-8 (MVSIKRYE) are cytoplasmic. A helical membrane pass occupies residues 9–29 (IISFVIAAFFFLSGLSMWIAF). The Extracellular segment spans residues 30–502 (WPIFNSELRS…VWLGVIIVPR (473 aa)). Residues Asn73, Asn236, Asn363, and Asn376 are each glycosylated (N-linked (GlcNAc...) asparagine). Residues 503–523 (IIEYLKFVLIFISICILTTLL) traverse the membrane as a helical segment. Residues 524–536 (VIRVRVKGTVSVV) are Cytoplasmic-facing.

It belongs to the CD36 family.

Its subcellular location is the membrane. This is an uncharacterized protein from Caenorhabditis elegans.